The sequence spans 280 residues: DNA repair protein RecO (280 aa).

The interval 261-280 is disordered; the sequence is DMAHGNHTGQEDLPATASGA.

This sequence belongs to the RecO family.

Functionally, involved in DNA repair and RecF pathway recombination. This Mycolicibacterium smegmatis (strain ATCC 700084 / mc(2)155) (Mycobacterium smegmatis) protein is DNA repair protein RecO.